A 167-amino-acid polypeptide reads, in one-letter code: Phosphopantetheine adenylyltransferase (167 aa).

Position 10 (serine 10) interacts with substrate. ATP is bound by residues 10-11 and histidine 18; that span reads SF. Lysine 42, alanine 79, and arginine 93 together coordinate substrate. Residues 94 to 96, glutamate 104, and 129 to 135 each bind ATP; these read GLR and VGHITAT.

It belongs to the bacterial CoaD family. Homohexamer. Mg(2+) serves as cofactor.

It is found in the cytoplasm. It carries out the reaction (R)-4'-phosphopantetheine + ATP + H(+) = 3'-dephospho-CoA + diphosphate. Its pathway is cofactor biosynthesis; coenzyme A biosynthesis; CoA from (R)-pantothenate: step 4/5. Functionally, reversibly transfers an adenylyl group from ATP to 4'-phosphopantetheine, yielding dephospho-CoA (dPCoA) and pyrophosphate. The polypeptide is Phosphopantetheine adenylyltransferase (Methylocella silvestris (strain DSM 15510 / CIP 108128 / LMG 27833 / NCIMB 13906 / BL2)).